Here is a 218-residue protein sequence, read N- to C-terminus: Regulator of G-protein signaling 20 (218 aa).

Residues 1-10 (MGSERTEMRK) are compositionally biased toward basic and acidic residues. The segment at 1–26 (MGSERTEMRKRQMAATQETPGTAQAQ) is disordered. Positions 14–26 (AATQETPGTAQAQ) are enriched in polar residues. The RGS domain occupies 92–208 (SFDKLMLTPA…MNSAIYKDLL (117 aa)).

As to quaternary structure, forms a complex with G(alpha)z/i2 subunits and mu-opioid receptors; the formation of this complex results in mu-opioid receptor desensitization. Interacts with OPRM1. Fatty acylated. Heavily palmitoylated in the cysteine string motif. Post-translationally, N- and O-glycosylated in synapsomal membranes. In terms of processing, sumoylated by SUMO1 and SUM02 in synaptosomes. The sumoylated forms act as a scaffold for sequestering mu-opioid receptor-activated G(alpha) subunits.

The protein localises to the membrane. The protein resides in the nucleus. It is found in the cytoplasm. Inhibits signal transduction by increasing the GTPase activity of G protein alpha subunits thereby driving them into their inactive GDP-bound form. Binds selectively to G(z)-alpha and G(alpha)-i2 subunits, accelerates their GTPase activity and regulates their signaling activities. The G(z)-alpha activity is inhibited by the phosphorylation and palmitoylation of the G-protein. Negatively regulates mu-opioid receptor-mediated activation of the G-proteins. The chain is Regulator of G-protein signaling 20 (RGS20) from Gallus gallus (Chicken).